The sequence spans 533 residues: Cytochrome P450 monooxygenase ltmK (533 aa).

A helical transmembrane segment spans residues 27 to 47; that stretch reads VHWLQVIVALLVLIVCIFLYW. Asparagine 116 carries an N-linked (GlcNAc...) asparagine glycan. Position 473 (cysteine 473) interacts with heme. The N-linked (GlcNAc...) asparagine glycan is linked to asparagine 528.

It belongs to the cytochrome P450 family. It depends on heme as a cofactor.

It localises to the membrane. Its pathway is secondary metabolite biosynthesis. In terms of biological role, cytochrome P450 monooxygenase; part of the gene clusters that mediates the biosynthesis of lolitrems, indole-diterpene mycotoxins that are potent tremorgens in mammals, and are synthesized by clavicipitaceous fungal endophytes in association with their grass hosts. The geranylgeranyl diphosphate (GGPP) synthase ltmG is proposed to catalyze the first step in lolitrem biosynthesis. LtmG catalyzes a series of iterative condensations of isopentenyl diphosphate (IPP) with dimethylallyl diphosphate (DMAPP), geranyl diphosphate (GPP), and farnesyl diphosphate (FPP), to form GGPP. GGPP then condenses with indole-3-glycerol phosphate to form 3-geranylgeranylindole, an acyclic intermediate, to be incorporated into paxilline. Either ltmG or ltmC could be responsible for this step, as both are putative prenyl transferases. The FAD-dependent monooxygenase ltmM then catalyzes the epoxidation of the two terminal alkenes of the geranylgeranyl moiety, which is subsequently cyclized by ltmB, to paspaline. The cytochrome P450 monooxygenases ltmQ and ltmP can sequentially oxidize paspaline to terpendole E and terpendole F. Alternatively, ltmP converts paspaline to an intermediate which is oxidized by ltmQ to terpendole F. LtmF, ltmK, ltmE and ltmJ appear to be unique to the epichloe endophytes. The prenyltransferase ltmF is involved in the 27-hydroxyl-O-prenylation. The cytochrome P450 monooxygenase ltmK is required for the oxidative acetal ring formation. The multi-functional prenyltransferase ltmE is required for C20- and C21-prenylations of the indole ring of paspalanes and acts together with the cytochrome P450 monooxygenase ltmJ to yield lolitremanes by multiple oxidations and ring closures. The stereoisomer pairs of lolitriol and lolitrem N or lolitrem B and lolitrem F may be attributed to variations in the way in which ring closure can occur under the action of ltmJ. While the major product of this pathway is lolitrem B, the prenyl transferases and cytochrome P450 monooxygenases identified in this pathway have a remarkable versatility in their regio- and stereo-specificities to generate a diverse range of metabolites that are products of a metabolic grid rather than a linear pathway. The polypeptide is Cytochrome P450 monooxygenase ltmK (Epichloe festucae var. lolii (Neotyphodium lolii)).